A 462-amino-acid polypeptide reads, in one-letter code: Protein ultraspiracle homolog (462 aa).

Positions 1 to 113 (MSSVAKKDKR…NHPLSGSKHL (113 aa)) are modulating. 2 NR C4-type zinc fingers span residues 114-134 (CSIC…CEGC) and 150-174 (CRED…YQKC). Residues 114-179 (CSICGDRASG…RYQKCLACGM (66 aa)) constitute a DNA-binding region (nuclear receptor). A hinge region spans residues 180–201 (KREAVQEERQRAARRTEDAHPS). Residues 204-453 (VQELSIERLL…SYIRDALCNH (250 aa)) form the NR LBD domain.

This sequence belongs to the nuclear hormone receptor family. NR2 subfamily. As to quaternary structure, heterodimer of USP and ECR. Abundant expression seen in males and ovaries.

The protein resides in the nucleus. The polypeptide is Protein ultraspiracle homolog (USP) (Bombyx mori (Silk moth)).